Here is a 452-residue protein sequence, read N- to C-terminus: D-inositol 3-phosphate glycosyltransferase (452 aa).

Residue histidine 25 coordinates 1D-myo-inositol 3-phosphate. UDP-N-acetyl-alpha-D-glucosamine contacts are provided by residues 31-32 (QP) and glycine 39. 1D-myo-inositol 3-phosphate is bound by residues 36–41 (DAGGMN), lysine 94, tyrosine 127, threonine 151, and arginine 171. UDP-N-acetyl-alpha-D-glucosamine is bound by residues arginine 245, lysine 250, and glutamine 309. Mg(2+) is bound by residues tyrosine 318, arginine 319, and serine 321. Glutamate 331 and glutamate 339 together coordinate UDP-N-acetyl-alpha-D-glucosamine. Threonine 345 is a binding site for Mg(2+).

Belongs to the glycosyltransferase group 1 family. MshA subfamily. In terms of assembly, homodimer.

It carries out the reaction 1D-myo-inositol 3-phosphate + UDP-N-acetyl-alpha-D-glucosamine = 1D-myo-inositol 2-acetamido-2-deoxy-alpha-D-glucopyranoside 3-phosphate + UDP + H(+). Functionally, catalyzes the transfer of a N-acetyl-glucosamine moiety to 1D-myo-inositol 3-phosphate to produce 1D-myo-inositol 2-acetamido-2-deoxy-glucopyranoside 3-phosphate in the mycothiol biosynthesis pathway. The chain is D-inositol 3-phosphate glycosyltransferase from Rhodococcus jostii (strain RHA1).